We begin with the raw amino-acid sequence, 212 residues long: Large ribosomal subunit protein uL3 (212 aa).

A disordered region spans residues 130–155 (KRGNMTHGSKNHRLPGSTGAGTTPGR).

This sequence belongs to the universal ribosomal protein uL3 family. As to quaternary structure, part of the 50S ribosomal subunit. Forms a cluster with proteins L14 and L19.

In terms of biological role, one of the primary rRNA binding proteins, it binds directly near the 3'-end of the 23S rRNA, where it nucleates assembly of the 50S subunit. This Rippkaea orientalis (strain PCC 8801 / RF-1) (Cyanothece sp. (strain PCC 8801)) protein is Large ribosomal subunit protein uL3.